An 81-amino-acid chain; its full sequence is Large ribosomal subunit protein bL31B (81 aa).

It belongs to the bacterial ribosomal protein bL31 family. Type B subfamily. In terms of assembly, part of the 50S ribosomal subunit.

This Limosilactobacillus reuteri (strain DSM 20016) (Lactobacillus reuteri) protein is Large ribosomal subunit protein bL31B.